The primary structure comprises 402 residues: Argininosuccinate synthase (402 aa).

ATP contacts are provided by residues alanine 13–serine 21 and alanine 40. Tyrosine 91 and serine 96 together coordinate L-citrulline. Glycine 121 is a binding site for ATP. Positions 123, 127, and 128 each coordinate L-aspartate. Asparagine 127 contacts L-citrulline. L-citrulline-binding residues include arginine 131, serine 180, serine 189, glutamate 265, and tyrosine 277.

This sequence belongs to the argininosuccinate synthase family. Type 1 subfamily. In terms of assembly, homotetramer.

The protein localises to the cytoplasm. It catalyses the reaction L-citrulline + L-aspartate + ATP = 2-(N(omega)-L-arginino)succinate + AMP + diphosphate + H(+). It participates in amino-acid biosynthesis; L-arginine biosynthesis; L-arginine from L-ornithine and carbamoyl phosphate: step 2/3. The protein is Argininosuccinate synthase of Leptospira biflexa serovar Patoc (strain Patoc 1 / Ames).